The chain runs to 250 residues: Acetylglutamate kinase (250 aa).

Residues 41–42, Arg63, and Asn156 contribute to the substrate site; that span reads GG.

It belongs to the acetylglutamate kinase family. ArgB subfamily.

The protein resides in the cytoplasm. The catalysed reaction is N-acetyl-L-glutamate + ATP = N-acetyl-L-glutamyl 5-phosphate + ADP. Its pathway is amino-acid biosynthesis; L-arginine biosynthesis; N(2)-acetyl-L-ornithine from L-glutamate: step 2/4. Catalyzes the ATP-dependent phosphorylation of N-acetyl-L-glutamate. The polypeptide is Acetylglutamate kinase (Listeria monocytogenes serovar 1/2a (strain ATCC BAA-679 / EGD-e)).